The primary structure comprises 197 residues: RNA pyrophosphohydrolase (197 aa).

In terms of domain architecture, Nudix hydrolase spans 6 to 154 (GYRPNVGIVL…KREVYQLALS (149 aa)). Positions 38–59 (GGIQHGESPEQAMYRELHEEVG) match the Nudix box motif.

This sequence belongs to the Nudix hydrolase family. RppH subfamily. It depends on a divalent metal cation as a cofactor.

In terms of biological role, accelerates the degradation of transcripts by removing pyrophosphate from the 5'-end of triphosphorylated RNA, leading to a more labile monophosphorylated state that can stimulate subsequent ribonuclease cleavage. This is RNA pyrophosphohydrolase from Polynucleobacter necessarius subsp. necessarius (strain STIR1).